The chain runs to 555 residues: Energy-dependent translational throttle protein EttA (555 aa).

ABC transporter domains lie at 6 to 259 (YTMH…AQEA) and 324 to 550 (LEVS…RIKY). An ATP-binding site is contributed by 39 to 46 (GLNGAGKS). The interval 95-139 (SEVVNALKRLDEVYALYADPDADFDKLAAEQGRLEEIIQAHDGHN) is arm. Residues 242–322 (GNYSSWLEQK…IPPGPRLGDK (81 aa)) form a ptIM region. Residue 356-363 (GPNGAGKS) participates in ATP binding.

The protein belongs to the ABC transporter superfamily. ABCF family. Translational throttle EttA subfamily. Monomer. Probably contacts ribosomal proteins L1, L5, L33 and S7, the 16S and 23S rRNA and the P-site containing tRNA(fMet).

It is found in the cytoplasm. It carries out the reaction ATP + H2O = ADP + phosphate + H(+). In terms of biological role, a translation factor that gates the progression of the 70S ribosomal initiation complex (IC, containing tRNA(fMet) in the P-site) into the translation elongation cycle by using a mechanism sensitive to the ATP/ADP ratio. Binds to the 70S ribosome E-site where it modulates the state of the translating ribosome during subunit translocation. ATP hydrolysis probably frees it from the ribosome, which can enter the elongation phase. This is Energy-dependent translational throttle protein EttA from Escherichia coli O157:H7.